Here is a 283-residue protein sequence, read N- to C-terminus: 2,3,4,5-tetrahydropyridine-2,6-dicarboxylate N-succinyltransferase (283 aa).

The substrate site is built by Arg107 and Asp144.

The protein belongs to the transferase hexapeptide repeat family. As to quaternary structure, homotrimer.

The protein resides in the cytoplasm. It carries out the reaction (S)-2,3,4,5-tetrahydrodipicolinate + succinyl-CoA + H2O = (S)-2-succinylamino-6-oxoheptanedioate + CoA. It functions in the pathway amino-acid biosynthesis; L-lysine biosynthesis via DAP pathway; LL-2,6-diaminopimelate from (S)-tetrahydrodipicolinate (succinylase route): step 1/3. The sequence is that of 2,3,4,5-tetrahydropyridine-2,6-dicarboxylate N-succinyltransferase from Rhodospirillum rubrum (strain ATCC 11170 / ATH 1.1.1 / DSM 467 / LMG 4362 / NCIMB 8255 / S1).